Reading from the N-terminus, the 31-residue chain is Glucagon-3 (31 aa).

It belongs to the glucagon family.

Its subcellular location is the secreted. Functionally, glucagon plays a key role in glucose metabolism and homeostasis. Regulates blood glucose by increasing gluconeogenesis and decreasing glycolysis. The sequence is that of Glucagon-3 from Huso dauricus (Kaluga sturgeon).